An 89-amino-acid polypeptide reads, in one-letter code: MKIGPPYLTKYERARIIGVRAFQLSIGAPPLVDPERAGSRNPLDIARYEVDNGILPVSIYRYLPGGGGQSLSLSRLVELAREILGSEYV.

It belongs to the archaeal Rpo6/eukaryotic RPB6 RNA polymerase subunit family. Part of the RNA polymerase complex.

The protein resides in the cytoplasm. It carries out the reaction RNA(n) + a ribonucleoside 5'-triphosphate = RNA(n+1) + diphosphate. Functionally, DNA-dependent RNA polymerase (RNAP) catalyzes the transcription of DNA into RNA using the four ribonucleoside triphosphates as substrates. The sequence is that of DNA-directed RNA polymerase subunit Rpo6 from Aeropyrum pernix (strain ATCC 700893 / DSM 11879 / JCM 9820 / NBRC 100138 / K1).